The following is a 452-amino-acid chain: Tripartite motif-containing protein 51 (452 aa).

The segment at 15 to 56 adopts an RING-type zinc-finger fold; it reads CPICMNYFLDPVTIDCGHSFCRPCLYLNWQDTAVLAQCSECK. Residues 88–129 form a B box-type zinc finger; sequence SEEQICGMHRETKKMFCEVDKSLLCLPCSNSQEHRNHIHCPI. 4 residues coordinate Zn(2+): Cys-93, His-96, Cys-115, and His-121. Residues 269-452 enclose the B30.2/SPRY domain; that stretch reads ELSAGPITGL…LRPIFCCSHF (184 aa).

This sequence belongs to the TRIM/RBCC family.

The protein is Tripartite motif-containing protein 51 (TRIM51) of Homo sapiens (Human).